The following is a 332-amino-acid chain: Phosphate acyltransferase (332 aa).

The protein belongs to the PlsX family. Homodimer. Probably interacts with PlsY.

It localises to the cytoplasm. The catalysed reaction is a fatty acyl-[ACP] + phosphate = an acyl phosphate + holo-[ACP]. It functions in the pathway lipid metabolism; phospholipid metabolism. Its function is as follows. Catalyzes the reversible formation of acyl-phosphate (acyl-PO(4)) from acyl-[acyl-carrier-protein] (acyl-ACP). This enzyme utilizes acyl-ACP as fatty acyl donor, but not acyl-CoA. This chain is Phosphate acyltransferase, found in Caldanaerobacter subterraneus subsp. tengcongensis (strain DSM 15242 / JCM 11007 / NBRC 100824 / MB4) (Thermoanaerobacter tengcongensis).